The following is a 192-amino-acid chain: Small ribosomal subunit protein uS5 (192 aa).

The S5 DRBM domain occupies 20–83 (FVDKLVHINR…EAAKRGLIRV (64 aa)). A disordered region spans residues 162–192 (SVAARRGLKVSALQARRRDADPADTSEAAVA).

The protein belongs to the universal ribosomal protein uS5 family. Part of the 30S ribosomal subunit. Contacts proteins S4 and S8.

With S4 and S12 plays an important role in translational accuracy. In terms of biological role, located at the back of the 30S subunit body where it stabilizes the conformation of the head with respect to the body. This Methylorubrum extorquens (strain CM4 / NCIMB 13688) (Methylobacterium extorquens) protein is Small ribosomal subunit protein uS5.